Reading from the N-terminus, the 401-residue chain is Heat stress transcription factor A-4a (401 aa).

A DNA-binding region spans residues 13 to 107 (LPPFLTKTYE…LMKNIHRRKP (95 aa)). The interval 122–188 (PLTDSERVRM…TMVSFVSQVL (67 aa)) is hydrophobic repeat HR-A/B. The short motif at 207–213 (RKRRFPR) is the Nuclear localization signal element. An AHA1 motif is present at residues 256–265 (IAIWENLVSD). The short motif at 341–350 (DGFWQQFFSE) is the AHA2 element. Residues 351–373 (NPGSTEQREVQLERKDDKDKAGV) form a disordered region. Residues 356-373 (EQREVQLERKDDKDKAGV) are compositionally biased toward basic and acidic residues. The short motif at 388 to 395 (ITEQLGHL) is the Nuclear export signal element.

It belongs to the HSF family. Class A subfamily. In terms of assembly, homotrimer. Post-translationally, exhibits temperature-dependent phosphorylation.

The protein resides in the cytoplasm. It is found in the nucleus. Its function is as follows. Transcriptional activator that specifically binds DNA sequence 5'-AGAAnnTTCT-3' known as heat shock promoter elements (HSE). In Arabidopsis thaliana (Mouse-ear cress), this protein is Heat stress transcription factor A-4a (HSFA4A).